A 67-amino-acid chain; its full sequence is Small ribosomal subunit protein eS17 (67 aa).

Belongs to the eukaryotic ribosomal protein eS17 family.

The sequence is that of Small ribosomal subunit protein eS17 from Korarchaeum cryptofilum (strain OPF8).